We begin with the raw amino-acid sequence, 114 residues long: METIEGIIVVTTSEIPGYRIVEVKGIARGGVVRATHLGRDIMALLRNIKGGEVKEYTEMMAEAREEALRRMALHAKELGANAVVNMRFATSNLGGSMAEIYAYGTAVVIEREEK.

The protein belongs to the UPF0145 family.

The protein is UPF0145 protein PYRAB04900 of Pyrococcus abyssi (strain GE5 / Orsay).